Reading from the N-terminus, the 391-residue chain is Alkanesulfonate monooxygenase (391 aa).

The protein belongs to the SsuD family.

The catalysed reaction is an alkanesulfonate + FMNH2 + O2 = an aldehyde + FMN + sulfite + H2O + 2 H(+). Functionally, catalyzes the desulfonation of aliphatic sulfonates. The chain is Alkanesulfonate monooxygenase from Rhodopseudomonas palustris (strain TIE-1).